We begin with the raw amino-acid sequence, 325 residues long: Ribose-phosphate pyrophosphokinase 4 (325 aa).

Mg(2+) contacts are provided by D145 and H147. A binding of phosphoribosylpyrophosphate region spans residues 228-243 (GRHVVIVDDLVQSGGT).

This sequence belongs to the ribose-phosphate pyrophosphokinase family. Mg(2+) serves as cofactor.

It catalyses the reaction D-ribose 5-phosphate + ATP = 5-phospho-alpha-D-ribose 1-diphosphate + AMP + H(+). The sequence is that of Ribose-phosphate pyrophosphokinase 4 from Oryza sativa subsp. japonica (Rice).